Consider the following 121-residue polypeptide: Large ribosomal subunit protein bL12 (121 aa).

Belongs to the bacterial ribosomal protein bL12 family. In terms of assembly, homodimer. Part of the ribosomal stalk of the 50S ribosomal subunit. Forms a multimeric L10(L12)X complex, where L10 forms an elongated spine to which 2 to 4 L12 dimers bind in a sequential fashion. Binds GTP-bound translation factors.

Functionally, forms part of the ribosomal stalk which helps the ribosome interact with GTP-bound translation factors. Is thus essential for accurate translation. In Shewanella baltica (strain OS185), this protein is Large ribosomal subunit protein bL12.